A 536-amino-acid chain; its full sequence is SNW domain-containing protein 1 (536 aa).

Positions 1–46 (MALTSFLPAPTQLSQDQLEAEEKARSQRSRQTSLVSSRREPPPYGY) are disordered. Ala-2 carries the post-translational modification N-acetylalanine. Ser-14 is modified (phosphoserine). Lys-23 is covalently cross-linked (Glycyl lysine isopeptide (Lys-Gly) (interchain with G-Cter in SUMO2)). The segment at 59–79 (GDGGAFPEIHVAQYPLDMGRK) is interaction with PPIL1. Glycyl lysine isopeptide (Lys-Gly) (interchain with G-Cter in SUMO2) cross-links involve residues Lys-81, Lys-97, Lys-115, Lys-122, Lys-141, Lys-158, and Lys-170. The interval 174 to 339 (AQYIRYTPSQ…KARERRAGIK (166 aa)) is SNW. Ser-182 and Ser-190 each carry phosphoserine. Lys-193 is covalently cross-linked (Glycyl lysine isopeptide (Lys-Gly) (interchain with G-Cter in SUMO2)). A disordered region spans residues 209–234 (PPRFKINKKIPRGPPSPPAPVMHSPS). Ser-224, Ser-232, and Ser-234 each carry phosphoserine. Glycyl lysine isopeptide (Lys-Gly) (interchain with G-Cter in SUMO2) cross-links involve residues Lys-240, Lys-258, Lys-286, Lys-339, Lys-344, Lys-416, and Lys-441. Residues 311 to 386 (KMAQKEKEKH…RSKLQRNENR (76 aa)) are disordered. Ser-446 carries the post-translational modification Phosphoserine. Lys-452 is covalently cross-linked (Glycyl lysine isopeptide (Lys-Gly) (interchain with G-Cter in SUMO2)). Basic and acidic residues-rich tracts occupy residues 469–489 (TNRFVPDKEFSGSDRRQRGRE) and 503–530 (KFLEEAKQHGGSKRPSDSSRPKEHEHEG). The segment at 469-536 (TNRFVPDKEF…EHEGKKRRKE (68 aa)) is disordered. Residues Ser-479 and Ser-481 each carry the phosphoserine modification. Residue Lys-509 forms a Glycyl lysine isopeptide (Lys-Gly) (interchain with G-Cter in SUMO2) linkage.

Belongs to the SNW family. In terms of assembly, identified in the spliceosome C complex. Associates with U4/U6-U5 tri-small nuclear ribonucleoproteins (U4/U6-U5 tri-snRNPs). Component of the minor spliceosome, which splices U12-type introns. Interacts with SKI, SMAD2,SMAD3, RBPJ, RB1, PABPN1, MAGEA1, SIRT1, FOXN3, U2AF2, PPIL1, DAXX and ATP1B4. Interacts with VDR and RXRA; preferentially associates with VDR:RXRA heterodimers. Interacts with NCOR2. Interacts with MAML1. Interacts with NOTCH1 NICD; the interaction involves multimerized NOTCH1 NICD. Forms a complex with NOTCH1 NICD and MAML1; the association is dissociated by RBPJ. Associates with positive transcription elongation factor b (P-TEFb). Component of the SNARP complex which consists at least of SNIP1, SNW1, THRAP3, BCLAF1 and PNN.

The protein resides in the nucleus. Involved in pre-mRNA splicing as component of the spliceosome. As a component of the minor spliceosome, involved in the splicing of U12-type introns in pre-mRNAs. Required in the specific splicing of CDKN1A pre-mRNA; the function probably involves the recruitment of U2AF2 to the mRNA. May recruit PPIL1 to the spliceosome. May be involved in cyclin-D1/CCND1 mRNA stability through the SNARP complex which associates with both the 3'end of the CCND1 gene and its mRNA. Involved in transcriptional regulation. Modulates TGF-beta-mediated transcription via association with SMAD proteins, MYOD1-mediated transcription via association with PABPN1, RB1-mediated transcriptional repression, and retinoid-X receptor (RXR)- and vitamin D receptor (VDR)-dependent gene transcription in a cell line-specific manner probably involving coactivators NCOA1 and GRIP1. Is involved in NOTCH1-mediated transcriptional activation. Binds to multimerized forms of Notch intracellular domain (NICD) and is proposed to recruit transcriptional coactivators such as MAML1 to form an intermediate preactivation complex which associates with DNA-bound CBF-1/RBPJ to form a transcriptional activation complex by releasing SNW1 and redundant NOTCH1 NICD. This chain is SNW domain-containing protein 1 (SNW1), found in Pongo abelii (Sumatran orangutan).